Reading from the N-terminus, the 477-residue chain is Argininosuccinate lyase (477 aa).

Positions methionine 1–glycine 18 are enriched in polar residues. The tract at residues methionine 1 to glycine 21 is disordered.

The protein belongs to the lyase 1 family. Argininosuccinate lyase subfamily.

Its subcellular location is the cytoplasm. The enzyme catalyses 2-(N(omega)-L-arginino)succinate = fumarate + L-arginine. The protein operates within amino-acid biosynthesis; L-arginine biosynthesis; L-arginine from L-ornithine and carbamoyl phosphate: step 3/3. This Acinetobacter baylyi (strain ATCC 33305 / BD413 / ADP1) protein is Argininosuccinate lyase.